A 984-amino-acid chain; its full sequence is Putative formate dehydrogenase SAV2309 (984 aa).

A 2Fe-2S ferredoxin-type domain is found at 3 to 79 (EHLVVTLDGK…PMTVNTVNND (77 aa)). [2Fe-2S] cluster-binding residues include C37, C48, C51, and C63. The 4Fe-4S His(Cys)3-ligated-type domain occupies 79–119 (DVKDAQKEALDRILEKHMLYCTVCDYNNGDCEIHNTMDAWG). Residues H95, C99, C102, C109, C147, C150, C153, C157, C190, C193, C196, C200, C264, C267, C271, and C299 each contribute to the [4Fe-4S] cluster site. 2 4Fe-4S ferredoxin-type domains span residues 138–165 (PFYRYDPNQCILCGRCVEACQDIEVNET) and 181–211 (NDVPINESSCVSCGQCATVCPCNAMMEVNME). The formate dehydrogenase stretch occupies residues 252–984 (MRKERIKKTK…YVFPGNQVDK (733 aa)). The 4Fe-4S Mo/W bis-MGD-type domain maps to 257 to 313 (IKKTKTVCTYCGVGCSFEVWTKDREILKVQPSHDSPANKIVTCVKGKFSWGHINSDQ).

In the C-terminal section; belongs to the prokaryotic molybdopterin-containing oxidoreductase family. It depends on [2Fe-2S] cluster as a cofactor. [4Fe-4S] cluster serves as cofactor. Requires Mo-bis(molybdopterin guanine dinucleotide) as cofactor.

The catalysed reaction is formate + NAD(+) = CO2 + NADH. The protein is Putative formate dehydrogenase SAV2309 of Staphylococcus aureus (strain Mu50 / ATCC 700699).